Here is a 273-residue protein sequence, read N- to C-terminus: Large ribosomal subunit protein uL2cz/uL2cy (273 aa).

2 disordered regions span residues 1–22 (MAKH…DRQV) and 225–273 (PVDH…RRRK).

The protein belongs to the universal ribosomal protein uL2 family. Part of the 50S ribosomal subunit.

The protein localises to the plastid. It is found in the chloroplast. The polypeptide is Large ribosomal subunit protein uL2cz/uL2cy (rpl2-A) (Zea mays (Maize)).